A 551-amino-acid polypeptide reads, in one-letter code: Chloride channel CLIC-like protein 1 (551 aa).

The first 18 residues, 1–18 (MLCSLLLCECLLLVAGYA), serve as a signal peptide directing secretion. The Lumenal segment spans residues 19-184 (HDDDWIDPTD…EDSFGVDPYN (166 aa)). A helical transmembrane segment spans residues 185 to 205 (VLMVLLCLLCIVVLVATELWT). Residues 206 to 216 (YVRWYTQLRRV) lie on the Cytoplasmic side of the membrane. The chain crosses the membrane as a helical span at residues 217–237 (LIISFLFSLGWNWMYLYKLAF). The Lumenal portion of the chain corresponds to 238-329 (AQHQAEVAKM…GEFIKALMKE (92 aa)). A helical transmembrane segment spans residues 330–350 (IPALLHLPVLIIMALAILSFC). The Cytoplasmic segment spans residues 351–551 (YGAGKSVHVL…GQDPVSSPCG (201 aa)). Residues 363 to 415 (IGGPESEPPQALRPRDRRRQEEIDYRPDGGAGDADFHYRGQMGPTEQGPYAKT) are disordered. Residues 380–389 (RRQEEIDYRP) are compositionally biased toward basic and acidic residues. Phosphoserine occurs at positions 438 and 464. Residues 447-551 (VPDAEAREHP…GQDPVSSPCG (105 aa)) are disordered. Phosphothreonine is present on T482. A compositionally biased stretch (polar residues) spans 488–508 (TESSQSAKPVSGQDTSGNTEG). Phosphoserine is present on residues S509, S524, and S532.

The protein belongs to the chloride channel MCLC family. In terms of assembly, homomultimers. Interacts with mitochondrial protein PIGBOS1 (via C-terminus); the interaction occurs at the mitochondria-associated endoplasmic reticulum (ER) membrane, a zone of contact between the ER and mitochondrial membranes, but does not appear to play a role in ER-mitochondria tethering and is not affected by ER stress. Interacts with CALR. In terms of tissue distribution, expressed in the retina of the eye, with extensive expression in the lamina cribrosa, optic nerve, ganglion cell layer, inner nuclear layer, outer nuclear layer and retinal pigment epithelium.

The protein resides in the endoplasmic reticulum membrane. It carries out the reaction chloride(in) = chloride(out). The enzyme catalyses bromide(in) = bromide(out). It catalyses the reaction nitrate(in) = nitrate(out). The catalysed reaction is fluoride(in) = fluoride(out). Its activity is regulated as follows. Inhibited by ER lumenal Ca(2+). In terms of biological role, anion-selective channel with Ca(2+)-dependent and voltage-independent gating. Permeable to small monovalent anions with selectivity for bromide &gt; chloride &gt; nitrate &gt; fluoride. Operates in the endoplasmic reticulum (ER) membrane where it mediates chloride efflux to compensate for the loss of positive charges from the ER lumen upon Ca(2+) release. Contributes to the maintenance of ER Ca(2+) pools and activation of unfolded protein response to prevent accumulation of misfolded proteins in the ER lumen. Particularly involved in ER homeostasis mechanisms underlying motor neurons and retinal photoreceptors survival. In Homo sapiens (Human), this protein is Chloride channel CLIC-like protein 1.